Reading from the N-terminus, the 131-residue chain is Global transcriptional regulator Spx 2 (131 aa).

Residues Cys-10 and Cys-13 are joined by a disulfide bond.

Belongs to the ArsC family. Spx subfamily. In terms of assembly, interacts with the C-terminal domain of the alpha subunit of the RNAP.

The protein localises to the cytoplasm. Its function is as follows. Global transcriptional regulator that plays a key role in stress response and exerts either positive or negative regulation of genes. Acts by interacting with the C-terminal domain of the alpha subunit of the RNA polymerase (RNAP). This interaction can enhance binding of RNAP to the promoter region of target genes and stimulate their transcription, or block interaction of RNAP with activator. This Bacillus cereus (strain ATCC 14579 / DSM 31 / CCUG 7414 / JCM 2152 / NBRC 15305 / NCIMB 9373 / NCTC 2599 / NRRL B-3711) protein is Global transcriptional regulator Spx 2.